Consider the following 428-residue polypeptide: Probable pectin lyase F (428 aa).

The first 20 residues, 1 to 20 (MVLLHPLLTAAALLGASARA), serve as a signal peptide directing secretion. C83 and C107 are oxidised to a cystine. R257 is a catalytic residue. N276 carries N-linked (GlcNAc...) asparagine glycosylation. Cysteines 324 and 332 form a disulfide. A disordered region spans residues 383-428 (GSGGSGAASSSVSITPSPTSSAIPSSSATPSSSAYARRHYARHHHY). Low complexity predominate over residues 389–417 (AASSSVSITPSPTSSAIPSSSATPSSSAY). Residues 418-428 (ARRHYARHHHY) show a composition bias toward basic residues.

The protein belongs to the polysaccharide lyase 1 family.

The protein resides in the secreted. It catalyses the reaction Eliminative cleavage of (1-&gt;4)-alpha-D-galacturonan methyl ester to give oligosaccharides with 4-deoxy-6-O-methyl-alpha-D-galact-4-enuronosyl groups at their non-reducing ends.. Its function is as follows. Pectinolytic enzymes consist of four classes of enzymes: pectin lyase, polygalacturonase, pectin methylesterase and rhamnogalacturonase. Among pectinolytic enzymes, pectin lyase is the most important in depolymerization of pectin, since it cleaves internal glycosidic bonds of highly methylated pectins. The protein is Probable pectin lyase F (pelF) of Aspergillus oryzae (strain ATCC 42149 / RIB 40) (Yellow koji mold).